A 493-amino-acid polypeptide reads, in one-letter code: MGETAAANNHRHHHHHGHQVFDVASHDFVPPQPAFKCFDDDGRLKRTGTVWTASAHIITAVIGSGVLSLAWAIAQLGWIAGPAVMLLFSLVTLYSSTLLSDCYRTGDAVSGKRNYTYMDAVRSILGGFKFKICGLIQYLNLFGIAIGYTIAASISMMAIKRSNCFHKSGGKDPCHMSSNPYMIVFGVAEILLSQVPDFDQIWWISIVAAVMSFTYSAIGLALGIVQVAANGVFKGSLTGISIGTVTQTQKIWRTFQALGDIAFAYSYSVVLIEIQDTVRSPPAESKTMKKATKISIAVTTIFYMLCGSMGYAAFGDAAPGNLLTGFGFYNPFWLLDIANAAIVVHLVGAYQVFAQPIFAFIEKSVAERYPDNDFLSKEFEIRIPGFKSPYKVNVFRMVYRSGFVVTTTVISMLMPFFNDVVGILGALGFWPLTVYFPVEMYIKQRKVEKWSTRWVCLQMLSVACLVISVVAGVGSIAGVMLDLKVYKPFKSTY.

The Cytoplasmic segment spans residues 1–49 (MGETAAANNHRHHHHHGHQVFDVASHDFVPPQPAFKCFDDDGRLKRTGT). 2 consecutive transmembrane segments (helical) span residues 50 to 70 (VWTASAHIITAVIGSGVLSLA) and 71 to 91 (WAIAQLGWIAGPAVMLLFSLV). Residues 92–138 (TLYSSTLLSDCYRTGDAVSGKRNYTYMDAVRSILGGFKFKICGLIQY) are Cytoplasmic-facing. A helical transmembrane segment spans residues 139 to 159 (LNLFGIAIGYTIAASISMMAI). Over 160–175 (KRSNCFHKSGGKDPCH) the chain is Extracellular. The chain crosses the membrane as a helical span at residues 176–196 (MSSNPYMIVFGVAEILLSQVP). Residues 197–200 (DFDQ) lie on the Cytoplasmic side of the membrane. The chain crosses the membrane as a helical span at residues 201 to 221 (IWWISIVAAVMSFTYSAIGLA). Over 222-253 (LGIVQVAANGVFKGSLTGISIGTVTQTQKIWR) the chain is Extracellular. The chain crosses the membrane as a helical span at residues 254-274 (TFQALGDIAFAYSYSVVLIEI). Residues 275 to 293 (QDTVRSPPAESKTMKKATK) lie on the Cytoplasmic side of the membrane. The chain crosses the membrane as a helical span at residues 294 to 314 (ISIAVTTIFYMLCGSMGYAAF). At 315 to 340 (GDAAPGNLLTGFGFYNPFWLLDIANA) the chain is on the extracellular side. A helical membrane pass occupies residues 341 to 361 (AIVVHLVGAYQVFAQPIFAFI). The Cytoplasmic segment spans residues 362-396 (EKSVAERYPDNDFLSKEFEIRIPGFKSPYKVNVFR). The chain crosses the membrane as a helical span at residues 397-417 (MVYRSGFVVTTTVISMLMPFF). Topologically, residues 418 to 419 (ND) are extracellular. Residues 420-440 (VVGILGALGFWPLTVYFPVEM) form a helical membrane-spanning segment. Over 441-458 (YIKQRKVEKWSTRWVCLQ) the chain is Cytoplasmic. Residues 459-479 (MLSVACLVISVVAGVGSIAGV) form a helical membrane-spanning segment. Topologically, residues 480–493 (MLDLKVYKPFKSTY) are extracellular.

The protein belongs to the amino acid/polyamine transporter 2 family. Amino acid/auxin permease (AAAP) (TC 2.A.18.2) subfamily. As to expression, highly expressed in developing pods. Found in the vascular strands of siliques, cotyledons, leaves and roots, in the inner phloem of stems, and in the funiculi. Lower levels of expression in flowers. Not expressed in seeds.

It is found in the cell membrane. With respect to regulation, inhibited by diethylpyrocarbonate (DEPC). Its function is as follows. Amino acid-proton symporter. Stereospecific transporter with a broad specificity for histidine, arginine, glutamate and neutral amino acids, favoring small amino acids such as alanine, asparagine and glutamine. Also accepts large aromatic residues such as phenlalanine or tyrosine. Has a much higher affinity for basic amino acids as compared with AAP1. May function in xylem-to-phloem transfer and in uptake of amino acids assimilated in the green silique tissue. This Arabidopsis thaliana (Mouse-ear cress) protein is Amino acid permease 2 (AAP2).